The sequence spans 591 residues: Laccase (591 aa).

A signal peptide spans Met1–Ala20. 2 consecutive Plastocyanin-like domains span residues Val66 to Asp189 and Ile198 to Asn356. N-linked (GlcNAc...) asparagine glycosylation occurs at Asn121. Positions 126, 128, 171, and 173 each coordinate Cu cation. 2 disulfides stabilise this stretch: Cys147/Cys571 and Cys332/Cys366. Residues Asn234, Asn242, Asn265, and Asn323 are each glycosylated (N-linked (GlcNAc...) asparagine). Residues Asn407 and Asn425 are each glycosylated (N-linked (GlcNAc...) asparagine). The region spanning Gly416–Gln551 is the Plastocyanin-like 3 domain. Cu cation is bound by residues His463, His466, His468, His533, Cys534, His535, and His539.

This sequence belongs to the multicopper oxidase family. Requires Cu cation as cofactor.

It is found in the secreted. The enzyme catalyses 4 hydroquinone + O2 = 4 benzosemiquinone + 2 H2O. Lignin degradation and detoxification of lignin-derived products. The protein is Laccase (LAC-1) of Cryphonectria parasitica (Chestnut blight fungus).